The following is a 217-amino-acid chain: 4-hydroxy-tetrahydrodipicolinate reductase (217 aa).

Residues 7 to 12 (GFKGKM), 71 to 73 (GTT), and 95 to 98 (SYNF) contribute to the NAD(+) site. His-127 serves as the catalytic Proton donor/acceptor. (S)-2,3,4,5-tetrahydrodipicolinate is bound at residue His-128. Lys-131 functions as the Proton donor in the catalytic mechanism. 137–138 (GT) contacts (S)-2,3,4,5-tetrahydrodipicolinate.

The protein belongs to the DapB family.

It is found in the cytoplasm. It carries out the reaction (S)-2,3,4,5-tetrahydrodipicolinate + NAD(+) + H2O = (2S,4S)-4-hydroxy-2,3,4,5-tetrahydrodipicolinate + NADH + H(+). The enzyme catalyses (S)-2,3,4,5-tetrahydrodipicolinate + NADP(+) + H2O = (2S,4S)-4-hydroxy-2,3,4,5-tetrahydrodipicolinate + NADPH + H(+). It functions in the pathway amino-acid biosynthesis; L-lysine biosynthesis via DAP pathway; (S)-tetrahydrodipicolinate from L-aspartate: step 4/4. In terms of biological role, catalyzes the conversion of 4-hydroxy-tetrahydrodipicolinate (HTPA) to tetrahydrodipicolinate. In Thermosipho africanus (strain TCF52B), this protein is 4-hydroxy-tetrahydrodipicolinate reductase.